A 378-amino-acid polypeptide reads, in one-letter code: Chaperone protein DnaJ (378 aa).

In terms of domain architecture, J spans 5-70; it reads DYYEVLGVGR…NKKAAYDQFG (66 aa). The segment at 134 to 212 adopts a CR-type zinc-finger fold; sequence GLTKELRIPT…CHGDGRVEKT (79 aa). Residues Cys-147, Cys-150, Cys-164, Cys-167, Cys-186, Cys-189, Cys-200, and Cys-203 each coordinate Zn(2+). CXXCXGXG motif repeat units follow at residues 147-154, 164-171, 186-193, and 200-207; these read CDVCDGSG, CTTCHGQG, CPTCHGRG, and CAKCHGDG.

It belongs to the DnaJ family. In terms of assembly, homodimer. The cofactor is Zn(2+).

The protein localises to the cytoplasm. Its function is as follows. Participates actively in the response to hyperosmotic and heat shock by preventing the aggregation of stress-denatured proteins and by disaggregating proteins, also in an autonomous, DnaK-independent fashion. Unfolded proteins bind initially to DnaJ; upon interaction with the DnaJ-bound protein, DnaK hydrolyzes its bound ATP, resulting in the formation of a stable complex. GrpE releases ADP from DnaK; ATP binding to DnaK triggers the release of the substrate protein, thus completing the reaction cycle. Several rounds of ATP-dependent interactions between DnaJ, DnaK and GrpE are required for fully efficient folding. Also involved, together with DnaK and GrpE, in the DNA replication of plasmids through activation of initiation proteins. The sequence is that of Chaperone protein DnaJ from Shewanella oneidensis (strain ATCC 700550 / JCM 31522 / CIP 106686 / LMG 19005 / NCIMB 14063 / MR-1).